The primary structure comprises 265 residues: Phosphate import ATP-binding protein PstB (265 aa).

Residues 11-260 (VSADEVKIAA…PRDPRTESYI (250 aa)) enclose the ABC transporter domain. Residue 50 to 57 (GPSGCGKS) coordinates ATP.

This sequence belongs to the ABC transporter superfamily. Phosphate importer (TC 3.A.1.7) family. The complex is composed of two ATP-binding proteins (PstB), two transmembrane proteins (PstC and PstA) and a solute-binding protein (PstS).

The protein localises to the cell inner membrane. It carries out the reaction phosphate(out) + ATP + H2O = ADP + 2 phosphate(in) + H(+). Its function is as follows. Part of the ABC transporter complex PstSACB involved in phosphate import. Responsible for energy coupling to the transport system. In Cereibacter sphaeroides (strain ATCC 17023 / DSM 158 / JCM 6121 / CCUG 31486 / LMG 2827 / NBRC 12203 / NCIMB 8253 / ATH 2.4.1.) (Rhodobacter sphaeroides), this protein is Phosphate import ATP-binding protein PstB.